The chain runs to 136 residues: 6,7-dimethyl-8-ribityllumazine synthase (136 aa).

5-amino-6-(D-ribitylamino)uracil contacts are provided by residues Phe11, 43 to 45 (VYD), and 67 to 69 (CVI). 72 to 73 (DT) provides a ligand contact to (2S)-2-hydroxy-3-oxobutyl phosphate. Residue His75 is the Proton donor of the active site. Leu100 is a binding site for 5-amino-6-(D-ribitylamino)uracil. Arg115 lines the (2S)-2-hydroxy-3-oxobutyl phosphate pocket.

It belongs to the DMRL synthase family. In terms of assembly, forms an icosahedral capsid composed of 60 subunits, arranged as a dodecamer of pentamers.

The catalysed reaction is (2S)-2-hydroxy-3-oxobutyl phosphate + 5-amino-6-(D-ribitylamino)uracil = 6,7-dimethyl-8-(1-D-ribityl)lumazine + phosphate + 2 H2O + H(+). The protein operates within cofactor biosynthesis; riboflavin biosynthesis; riboflavin from 2-hydroxy-3-oxobutyl phosphate and 5-amino-6-(D-ribitylamino)uracil: step 1/2. In terms of biological role, catalyzes the formation of 6,7-dimethyl-8-ribityllumazine by condensation of 5-amino-6-(D-ribitylamino)uracil with 3,4-dihydroxy-2-butanone 4-phosphate. This is the penultimate step in the biosynthesis of riboflavin. The polypeptide is 6,7-dimethyl-8-ribityllumazine synthase (Methanococcus aeolicus (strain ATCC BAA-1280 / DSM 17508 / OCM 812 / Nankai-3)).